The sequence spans 391 residues: Argininosuccinate synthase (391 aa).

6-14 (AYSGGLDTT) provides a ligand contact to ATP. Tyr-84 contributes to the L-citrulline binding site. ATP is bound at residue Gly-114. Positions 116, 120, and 121 each coordinate L-aspartate. Asn-120 provides a ligand contact to L-citrulline. L-citrulline-binding residues include Arg-124, Ser-171, Ser-180, Glu-253, and Tyr-265.

Belongs to the argininosuccinate synthase family. Type 1 subfamily. Homotetramer.

Its subcellular location is the cytoplasm. It carries out the reaction L-citrulline + L-aspartate + ATP = 2-(N(omega)-L-arginino)succinate + AMP + diphosphate + H(+). It functions in the pathway amino-acid biosynthesis; L-arginine biosynthesis; L-arginine from L-ornithine and carbamoyl phosphate: step 2/3. The protein is Argininosuccinate synthase of Sulfolobus acidocaldarius (strain ATCC 33909 / DSM 639 / JCM 8929 / NBRC 15157 / NCIMB 11770).